The sequence spans 157 residues: DNA gyrase inhibitor (157 aa).

Belongs to the DNA gyrase inhibitor family. In terms of assembly, interacts with DNA gyrase.

It is found in the cytoplasm. Inhibits the supercoiling activity of DNA gyrase. Acts by inhibiting DNA gyrase at an early step, prior to (or at the step of) binding of DNA by the gyrase. It protects cells against toxins that target DNA gyrase, by inhibiting activity of these toxins and reducing the formation of lethal double-strand breaks in the cell. The sequence is that of DNA gyrase inhibitor from Klebsiella pneumoniae (strain 342).